A 247-amino-acid polypeptide reads, in one-letter code: Myelin-oligodendrocyte glycoprotein (247 aa).

Positions 1–29 (MASLSRPSLPSCLCSFLLLLLLQVSSSYA) are cleaved as a signal peptide. Over 30-154 (GQFRVIGPRH…EDPFYWVSPG (125 aa)) the chain is Extracellular. In terms of domain architecture, Ig-like V-type spans 32-145 (FRVIGPRHPI…EEAAMELKVE (114 aa)). Cysteine 53 and cysteine 127 are oxidised to a cystine. N-linked (GlcNAc...) asparagine glycosylation occurs at asparagine 60. Residues 155-175 (VLVLLAVLPVLLLQITVGLIF) traverse the membrane as a helical segment. Residues 176–210 (LCLQYRLRGKLRAEIENLHRTFDPHFLRVPCWKIT) are Cytoplasmic-facing. Residues 211–231 (LFVIVPVLGPLVALIICYNWL) traverse the membrane as a helical segment. Residues 232 to 247 (HRRLAGQFLEELRNPF) lie on the Extracellular side of the membrane.

It belongs to the immunoglobulin superfamily. BTN/MOG family. Homodimer. May form heterodimers between the different isoforms. As to quaternary structure, (Microbial infection) Interacts with rubella virus E2 glycoprotein. In terms of tissue distribution, found exclusively in the CNS, where it is localized on the surface of myelin and oligodendrocyte cytoplasmic membranes.

It is found in the cell membrane. Mediates homophilic cell-cell adhesion. Minor component of the myelin sheath. May be involved in completion and/or maintenance of the myelin sheath and in cell-cell communication. Functionally, (Microbial infection) Acts as a receptor for rubella virus. This is Myelin-oligodendrocyte glycoprotein (MOG) from Homo sapiens (Human).